The sequence spans 285 residues: MAIRSLFSGNRKKKEDGQEKAFPEGLMTKCPECRHIQLTKELEKNHKVCTKCSHHFKMTAQERVDYFLDEGSFVSMDDHLQTSNPLNFPAYVEKISADQEKTGLNEAVLTGVGTLDGEEIVVAIMDSHFRMGSMGSVVGEKITRAVEKATELGVPFIIFTASGGARMQEGVLSLMQMAKTSVALKRHSDQGLLFISILTHPTTGGVSASFASVGDINIAEPQALIGFAGRRVIEETVREKLPNDFQTAEFLLEHGQLDAIFPRKDLRKQVSLLVKMHTKGGVQHV.

Residues 1-20 (MAIRSLFSGNRKKKEDGQEK) form a disordered region. The 260-residue stretch at 26–285 (LMTKCPECRH…MHTKGGVQHV (260 aa)) folds into the CoA carboxyltransferase N-terminal domain. Residues C30, C33, C49, and C52 each contribute to the Zn(2+) site. The segment at 30–52 (CPECRHIQLTKELEKNHKVCTKC) adopts a C4-type zinc-finger fold.

Belongs to the AccD/PCCB family. Acetyl-CoA carboxylase is a heterohexamer composed of biotin carboxyl carrier protein (AccB), biotin carboxylase (AccC) and two subunits each of ACCase subunit alpha (AccA) and ACCase subunit beta (AccD). Zn(2+) serves as cofactor.

It localises to the cytoplasm. It catalyses the reaction N(6)-carboxybiotinyl-L-lysyl-[protein] + acetyl-CoA = N(6)-biotinyl-L-lysyl-[protein] + malonyl-CoA. It participates in lipid metabolism; malonyl-CoA biosynthesis; malonyl-CoA from acetyl-CoA: step 1/1. In terms of biological role, component of the acetyl coenzyme A carboxylase (ACC) complex. Biotin carboxylase (BC) catalyzes the carboxylation of biotin on its carrier protein (BCCP) and then the CO(2) group is transferred by the transcarboxylase to acetyl-CoA to form malonyl-CoA. The protein is Acetyl-coenzyme A carboxylase carboxyl transferase subunit beta 2 of Lysinibacillus sphaericus (strain C3-41).